Reading from the N-terminus, the 1827-residue chain is Chromodomain-helicase-DNA-binding protein 2 (1827 aa).

The segment covering 1 to 14 (MMRNKDKSQEEDSS) has biased composition (basic and acidic residues). The tract at residues 1 to 264 (MMRNKDKSQE…EQQDNSETIE (264 aa)) is disordered. Low complexity predominate over residues 15-75 (LHSNASSRSA…SESESAGSKS (61 aa)). Basic and acidic residues-rich tracts occupy residues 81–101 (EAKE…KMWE), 115–128 (SRQE…KEEA), and 146–155 (KKQEKWKQDP). Residues 175-204 (GKARRPVPRRTVPKPQVKKQPKIQRGKRKK) are compositionally biased toward basic residues. 2 positions are modified to phosphoserine: S207 and S208. Positions 234-258 (EDDDFETDSDDLIEMTGEGGDEQQD) are enriched in acidic residues. T240 is modified (phosphothreonine). The residue at position 242 (S242) is a Phosphoserine. Chromo domains lie at 261–353 (ETIE…QWLG) and 378–456 (QIVE…IPTR). The Helicase ATP-binding domain maps to 496 to 666 (AHSWCKSNSV…WSLLHFIMPE (171 aa)). 509-516 (DEMGLGKT) lines the ATP pocket. Positions 617–620 (DEAH) match the DEAH box motif. In terms of domain architecture, Helicase C-terminal spans 795 to 946 (LLDKLLTRLR…HLVIQRMDTT (152 aa)). Disordered stretches follow at residues 1030 to 1124 (EDEE…RSVR), 1329 to 1465 (GTVA…DDLD), 1556 to 1638 (HKKR…ADRG), and 1679 to 1827 (HMDA…VRKT). The segment covering 1037–1065 (ERPHKDWDEIIPEEQRKKVEEEERQKELE) has biased composition (basic and acidic residues). Residues S1085, S1087, S1365, and S1386 each carry the phosphoserine modification. A compositionally biased stretch (basic and acidic residues) spans 1347–1371 (KKENKAPRLKDEHGLEPASPRHSDN). 2 stretches are compositionally biased toward basic and acidic residues: residues 1396 to 1431 (ENKE…KGGD) and 1565 to 1574 (EQKKKDDSLG). Positions 1464-1566 (LDQETFSICK…KKRSQEEEEQ (103 aa)) are CHD1 helical C-terminal domain (CHCT). The span at 1584–1601 (SGSSRDSLISQSHTSHNL) shows a compositional bias: polar residues. Basic and acidic residues-rich tracts occupy residues 1697-1719 (RPYE…DRHH), 1738-1748 (QDFRRMSDHRP), 1759-1771 (DHYR…KLGE), and 1794-1813 (SPHD…RSLE). A Phosphoserine modification is found at S1806.

As to quaternary structure, interacts with MYOD1. Interacts with histone H3.3. As to expression, widely expressed.

It localises to the nucleus. The catalysed reaction is ATP + H2O = ADP + phosphate + H(+). Functionally, ATP-dependent chromatin-remodeling factor that specifically binds to the promoter of target genes, leading to chromatin remodeling, possibly by promoting deposition of histone H3.3. Involved in myogenesis via interaction with MYOD1: binds to myogenic gene regulatory sequences and mediates incorporation of histone H3.3 prior to the onset of myogenic gene expression, promoting their expression. The chain is Chromodomain-helicase-DNA-binding protein 2 (Chd2) from Mus musculus (Mouse).